Reading from the N-terminus, the 209-residue chain is Response regulator protein VraR (209 aa).

Positions 4–120 (KVLFVDDHEM…DIADAVRKTY (117 aa)) constitute a Response regulatory domain. Aspartate 55 carries the post-translational modification 4-aspartylphosphate. Residues 141-206 (RAELYEMLTE…QAVIYAFQHN (66 aa)) enclose the HTH luxR-type domain. The segment at residues 165–184 (NQEIASASHITIKTVKTHVS) is a DNA-binding region (H-T-H motif).

In terms of processing, phosphorylated by VraS.

The protein resides in the cytoplasm. Functionally, member of the two-component regulatory system VraS/VraR involved in the control of the cell wall peptidoglycan biosynthesis. This is Response regulator protein VraR (vraR) from Staphylococcus epidermidis (strain ATCC 35984 / DSM 28319 / BCRC 17069 / CCUG 31568 / BM 3577 / RP62A).